The following is a 339-amino-acid chain: D-erythrose-4-phosphate dehydrogenase (339 aa).

Residue 11-12 participates in NAD(+) binding; the sequence is RI. Substrate contacts are provided by residues 153–155, Arg199, 212–213, and Arg235; these read SCT and TK. The Nucleophile role is filled by Cys154. NAD(+) is bound at residue Asn317.

This sequence belongs to the glyceraldehyde-3-phosphate dehydrogenase family. Epd subfamily. As to quaternary structure, homotetramer.

Its subcellular location is the cytoplasm. The catalysed reaction is D-erythrose 4-phosphate + NAD(+) + H2O = 4-phospho-D-erythronate + NADH + 2 H(+). Its pathway is cofactor biosynthesis; pyridoxine 5'-phosphate biosynthesis; pyridoxine 5'-phosphate from D-erythrose 4-phosphate: step 1/5. In terms of biological role, catalyzes the NAD-dependent conversion of D-erythrose 4-phosphate to 4-phosphoerythronate. In Shewanella pealeana (strain ATCC 700345 / ANG-SQ1), this protein is D-erythrose-4-phosphate dehydrogenase.